Consider the following 124-residue polypeptide: Large ribosomal subunit protein bL12 (124 aa).

This sequence belongs to the bacterial ribosomal protein bL12 family. As to quaternary structure, homodimer. Part of the ribosomal stalk of the 50S ribosomal subunit. Forms a multimeric L10(L12)X complex, where L10 forms an elongated spine to which 2 to 4 L12 dimers bind in a sequential fashion. Binds GTP-bound translation factors.

Functionally, forms part of the ribosomal stalk which helps the ribosome interact with GTP-bound translation factors. Is thus essential for accurate translation. The polypeptide is Large ribosomal subunit protein bL12 (Borreliella afzelii (strain PKo) (Borrelia afzelii)).